A 473-amino-acid polypeptide reads, in one-letter code: Inactive FRIGIDA-like protein 2 (473 aa).

Coiled-coil stretches lie at residues 3–35 and 306–361; these read AAESIAASINQIDEKKQKLKKAFDDLQAHRSLL and SLKV…RATK. A disordered region spans residues 356–384; that stretch reads RKRATKFNSPANPQQPQEQKVDNKRPRVA. Polar residues predominate over residues 361 to 373; the sequence is KFNSPANPQQPQE.

Belongs to the Frigida family. Expressed at low levels throughout the plant, with slightly higher expression in developing seeds and the highest expression in pollen.

Its function is as follows. Inactive FRIGIDA-like 2 protein. The protein is Inactive FRIGIDA-like protein 2 (FRL2) of Arabidopsis thaliana (Mouse-ear cress).